We begin with the raw amino-acid sequence, 105 residues long: Mini zinc finger protein 1 (105 aa).

Residues M1 to N29 form a disordered region. The segment at Y35–E84 adopts a ZF-HD dimerization-type; degenerate zinc-finger fold.

In terms of assembly, homo- and heterodimers.

It is found in the cytoplasm. Its function is as follows. Inhibits zinc finger homeodomain (ZHD) transcription factors, by interacting with them to prevent both their nuclear localization and their DNA-binding properties. This chain is Mini zinc finger protein 1 (MIF1), found in Oryza sativa subsp. indica (Rice).